We begin with the raw amino-acid sequence, 271 residues long: Glutamate 5-kinase (271 aa).

Position 14 (lysine 14) interacts with ATP. 3 residues coordinate substrate: serine 54, aspartate 141, and asparagine 157. ATP-binding positions include 177-178 and 219-225; these read SD and TGGMSSK.

It belongs to the glutamate 5-kinase family.

The protein resides in the cytoplasm. It carries out the reaction L-glutamate + ATP = L-glutamyl 5-phosphate + ADP. The protein operates within amino-acid biosynthesis; L-proline biosynthesis; L-glutamate 5-semialdehyde from L-glutamate: step 1/2. In terms of biological role, catalyzes the transfer of a phosphate group to glutamate to form L-glutamate 5-phosphate. This Enterococcus faecalis (strain ATCC 700802 / V583) protein is Glutamate 5-kinase.